The following is a 532-amino-acid chain: Flavin-containing monooxygenase 1 (532 aa).

Topologically, residues 1-510 are lumenal; it reads MVKRVAIVGA…TRTVQETPST (510 aa). FAD contacts are provided by residues 9–13, glutamate 32, 40–41, and 61–62; these read GAGVS, LW, and NS. Residues 60–61 and 195–198 contribute to the NADP(+) site; these read SN and SGTD. Residues 511-531 form a helical membrane-spanning segment; the sequence is FETLLKLFSFLALLVAVFFIF. Residue leucine 532 is a topological domain, cytoplasmic.

It belongs to the FMO family. FAD serves as cofactor. As to expression, expressed in liver, lung and kidney and to a lesser extent in the heart and brain.

Its subcellular location is the endoplasmic reticulum membrane. It catalyses the reaction hypotaurine + NADPH + O2 + H(+) = taurine + NADP(+) + H2O. The catalysed reaction is hypotaurine + NADH + O2 + H(+) = taurine + NAD(+) + H2O. It carries out the reaction trimethylamine + NADPH + O2 = trimethylamine N-oxide + NADP(+) + H2O. The enzyme catalyses N,N-dimethylaniline + NADPH + O2 + H(+) = N,N-dimethylaniline N-oxide + NADP(+) + H2O. Functionally, broad spectrum monooxygenase that catalyzes the oxygenation of a wide variety of nitrogen- and sulfur-containing compounds including xenobiotics. Catalyzes the S-oxygenation of hypotaurine to produce taurine, an organic osmolyte involved in cell volume regulation as well as a variety of cytoprotective and developmental processes. In vitro, catalyzes the N-oxygenation of trimethylamine (TMA) to produce trimethylamine N-oxide (TMAO) and could therefore participate to the detoxification of this compound that is generated by the action of gut microbiota from dietary precursors such as choline, choline containing compounds, betaine or L-carnitine. The protein is Flavin-containing monooxygenase 1 of Rattus norvegicus (Rat).